Reading from the N-terminus, the 469-residue chain is Sorting and assembly machinery component 50 homolog (469 aa).

A POTRA domain is found at 45-125 (VVVQHVHFDG…LDVTFEVTEL (81 aa)). At lysine 255 the chain carries N6-methyllysine.

It belongs to the SAM50/omp85 family. As to quaternary structure, associates with the mitochondrial contact site and cristae organizing system (MICOS) complex, composed of at least MICOS10/MIC10, CHCHD3/MIC19, CHCHD6/MIC25, APOOL/MIC27, IMMT/MIC60, APOO/MIC23/MIC26 and QIL1/MIC13. This complex was also known under the names MINOS or MitOS complex. The MICOS complex associates with mitochondrial outer membrane proteins SAMM50, MTX1 and MTX2 (together described as components of the mitochondrial outer membrane sorting assembly machinery (SAM) complex) and DNAJC11, mitochondrial inner membrane protein TMEM11 and with HSPA9. The MICOS and SAM complexes together with DNAJC11 are part of a large protein complex spanning both membranes termed the mitochondrial intermembrane space bridging (MIB) complex. Interacts with IMMT/MIC60. Interacts with CHCHD3/MIC19. Interacts with ARMC1. In terms of assembly, (Microbial infection) Interacts with parasite T.gondii RH strain MAF1b1; the interaction is probably indirect and results in the disruption of the MIB complex and the formation of SPOTs (structures positive for outer mitochondrial membrane (OMM)), a cellular response to OMM stress, which leads to the constitutive shedding of OMM vesicles.

It localises to the mitochondrion outer membrane. It is found in the cytoplasm. The protein localises to the mitochondrion. Functionally, plays a crucial role in the maintenance of the structure of mitochondrial cristae and the proper assembly of the mitochondrial respiratory chain complexes. Required for the assembly of TOMM40 into the TOM complex. The sequence is that of Sorting and assembly machinery component 50 homolog (Samm50) from Mus musculus (Mouse).